We begin with the raw amino-acid sequence, 173 residues long: ATP synthase subunit b (173 aa).

A helical membrane pass occupies residues 25 to 45 (LINLVIVIGVLYWFLKGFLGG).

It belongs to the ATPase B chain family. In terms of assembly, F-type ATPases have 2 components, F(1) - the catalytic core - and F(0) - the membrane proton channel. F(1) has five subunits: alpha(3), beta(3), gamma(1), delta(1), epsilon(1). F(0) has four main subunits: a(1), b(1), b'(1) and c(10-14). The alpha and beta chains form an alternating ring which encloses part of the gamma chain. F(1) is attached to F(0) by a central stalk formed by the gamma and epsilon chains, while a peripheral stalk is formed by the delta, b and b' chains.

It is found in the cellular thylakoid membrane. In terms of biological role, f(1)F(0) ATP synthase produces ATP from ADP in the presence of a proton or sodium gradient. F-type ATPases consist of two structural domains, F(1) containing the extramembraneous catalytic core and F(0) containing the membrane proton channel, linked together by a central stalk and a peripheral stalk. During catalysis, ATP synthesis in the catalytic domain of F(1) is coupled via a rotary mechanism of the central stalk subunits to proton translocation. Its function is as follows. Component of the F(0) channel, it forms part of the peripheral stalk, linking F(1) to F(0). The sequence is that of ATP synthase subunit b from Synechococcus sp. (strain CC9311).